We begin with the raw amino-acid sequence, 1184 residues long: DNA-directed RNA polymerase subunit beta (1184 aa).

The segment at 1160–1184 is disordered; sequence DDDFTNQNDAFNIVQPENAATEKTE.

It belongs to the RNA polymerase beta chain family. The RNAP catalytic core consists of 2 alpha, 1 beta, 1 beta' and 1 omega subunit. When a sigma factor is associated with the core the holoenzyme is formed, which can initiate transcription.

It catalyses the reaction RNA(n) + a ribonucleoside 5'-triphosphate = RNA(n+1) + diphosphate. DNA-dependent RNA polymerase catalyzes the transcription of DNA into RNA using the four ribonucleoside triphosphates as substrates. The sequence is that of DNA-directed RNA polymerase subunit beta from Listeria innocua serovar 6a (strain ATCC BAA-680 / CLIP 11262).